Consider the following 218-residue polypeptide: 3-isopropylmalate dehydratase small subunit (218 aa).

This sequence belongs to the LeuD family. LeuD type 1 subfamily. In terms of assembly, heterodimer of LeuC and LeuD.

The catalysed reaction is (2R,3S)-3-isopropylmalate = (2S)-2-isopropylmalate. Its pathway is amino-acid biosynthesis; L-leucine biosynthesis; L-leucine from 3-methyl-2-oxobutanoate: step 2/4. Its function is as follows. Catalyzes the isomerization between 2-isopropylmalate and 3-isopropylmalate, via the formation of 2-isopropylmaleate. The chain is 3-isopropylmalate dehydratase small subunit from Alkalilimnicola ehrlichii (strain ATCC BAA-1101 / DSM 17681 / MLHE-1).